The primary structure comprises 471 residues: Monocarboxylate transporter 11 (471 aa).

Positions 1–13 are enriched in basic residues; the sequence is MPAPQRKHRRGGF. The disordered stretch occupies residues 1–31; it reads MPAPQRKHRRGGFSHRCFPTPQTAMTPQPAG. At 1 to 35 the chain is on the cytoplasmic side; sequence MPAPQRKHRRGGFSHRCFPTPQTAMTPQPAGPPDG. Residues 19-28 show a composition bias toward low complexity; sequence PTPQTAMTPQ. 12 helical membrane-spanning segments follow: residues 36 to 56, 78 to 98, 106 to 126, 131 to 151, 163 to 183, 198 to 218, 243 to 263, 273 to 293, 312 to 332, 333 to 353, 367 to 389, and 407 to 427; these read GWGW…YGLL, AWIS…GSAL, PVVM…AFAS, LYLG…APAL, VLAV…LAPA, LLLG…LPLV, AFSI…VPYV, GLGG…DAGA, LAVF…VPVV, GGEE…GLSA, LVGV…LGGL, and ASFL…IGLP. At 428–471 the chain is on the cytoplasmic side; that stretch reads RALPSCGPASPPATPPPETGELLPAPQAVLLSPGGPGSTLDTTC.

Belongs to the major facilitator superfamily. Monocarboxylate porter (TC 2.A.1.13) family. In terms of assembly, interacts with isoform 2 of BSG. As to expression, expressed in liver, salivary gland and thyroid.

The protein localises to the endoplasmic reticulum membrane. It localises to the cell membrane. It carries out the reaction pyruvate(out) + H(+)(out) = pyruvate(in) + H(+)(in). Its function is as follows. Proton-linked monocarboxylate transporter. It catalyzes the transport of pyruvate across the plasma membrane. Probably involved in hepatic lipid metabolism: overexpression results in an increase of triacylglycerol(TAG) levels, small increases in intracellular diacylglycerols and decreases in lysophosphatidylcholine, cholesterol ester and sphingomyelin lipids. This is Monocarboxylate transporter 11 (SLC16A11) from Homo sapiens (Human).